We begin with the raw amino-acid sequence, 1076 residues long: Carbamoyl phosphate synthase large chain (1076 aa).

The interval 1-403 is carboxyphosphate synthetic domain; that stretch reads MPKRTDIQSI…SLQKALRGLE (403 aa). Positions 129, 169, 175, 176, 208, 210, 215, 241, 242, 243, 285, and 299 each coordinate ATP. Positions 133-328 constitute an ATP-grasp 1 domain; it reads DKAMKSIGLE…IAKVAAKLAV (196 aa). Mg(2+) contacts are provided by Gln285, Glu299, and Asn301. Positions 285, 299, and 301 each coordinate Mn(2+). The tract at residues 404 to 553 is oligomerization domain; it reads VGAAGLDEKV…YSTYDEECEA (150 aa). Residues 554 to 935 form a carbamoyl phosphate synthetic domain region; it reads NPTDKDKIMV…AYAKAELGCG (382 aa). The 192-residue stretch at 678–869 folds into the ATP-grasp 2 domain; the sequence is QQAVQRLGLK…LAKIAARVMV (192 aa). Positions 714, 753, 755, 760, 785, 786, 787, 788, 828, and 840 each coordinate ATP. Positions 828, 840, and 842 each coordinate Mg(2+). Residues Gln828, Glu840, and Asn842 each coordinate Mn(2+). The region spanning 936-1076 is the MGS-like domain; it reads SVYPEGGRAL…LHARVKANQA (141 aa). Residues 936–1076 form an allosteric domain region; the sequence is SVYPEGGRAL…LHARVKANQA (141 aa).

The protein belongs to the CarB family. As to quaternary structure, composed of two chains; the small (or glutamine) chain promotes the hydrolysis of glutamine to ammonia, which is used by the large (or ammonia) chain to synthesize carbamoyl phosphate. Tetramer of heterodimers (alpha,beta)4. Mg(2+) serves as cofactor. The cofactor is Mn(2+).

The enzyme catalyses hydrogencarbonate + L-glutamine + 2 ATP + H2O = carbamoyl phosphate + L-glutamate + 2 ADP + phosphate + 2 H(+). It carries out the reaction hydrogencarbonate + NH4(+) + 2 ATP = carbamoyl phosphate + 2 ADP + phosphate + 2 H(+). It functions in the pathway amino-acid biosynthesis; L-arginine biosynthesis; carbamoyl phosphate from bicarbonate: step 1/1. Its pathway is pyrimidine metabolism; UMP biosynthesis via de novo pathway; (S)-dihydroorotate from bicarbonate: step 1/3. In terms of biological role, large subunit of the glutamine-dependent carbamoyl phosphate synthetase (CPSase). CPSase catalyzes the formation of carbamoyl phosphate from the ammonia moiety of glutamine, carbonate, and phosphate donated by ATP, constituting the first step of 2 biosynthetic pathways, one leading to arginine and/or urea and the other to pyrimidine nucleotides. The large subunit (synthetase) binds the substrates ammonia (free or transferred from glutamine from the small subunit), hydrogencarbonate and ATP and carries out an ATP-coupled ligase reaction, activating hydrogencarbonate by forming carboxy phosphate which reacts with ammonia to form carbamoyl phosphate. This is Carbamoyl phosphate synthase large chain from Vibrio cholerae serotype O1 (strain ATCC 39315 / El Tor Inaba N16961).